We begin with the raw amino-acid sequence, 212 residues long: U8 snoRNA-decapping enzyme (212 aa).

A disordered region spans residues 1-23; sequence MAESRSPDRGAKEDKPRPRNISR. Histidine 37, arginine 63, and phenylalanine 70 together coordinate substrate. Residues 39-187 form the Nudix hydrolase domain; sequence LLHAPSQAKL…IGNSKSQLLY (149 aa). Residues glycine 72, glutamate 89, glutamate 93, and glutamate 150 each contribute to the Mn(2+) site. The short motif at 74-95 is the Nudix box element; sequence FVDTRDISLEEGLKRELEEELG. Substrate-binding residues include asparagine 180 and glutamine 184.

This sequence belongs to the Nudix hydrolase family. NUDT16 subfamily. In terms of assembly, homodimer. It depends on Mg(2+) as a cofactor. Requires Mn(2+) as cofactor. Co(2+) is required as a cofactor. Detected in ovary, and at very low levels in epithelial cells (at protein level).

It localises to the nucleus. Its subcellular location is the nucleolus. The protein resides in the nucleoplasm. It is found in the cytoplasm. It catalyses the reaction a 5'-end (N(7)-methyl 5'-triphosphoguanosine)-ribonucleoside in mRNA + H2O = N(7)-methyl-GDP + a 5'-end phospho-ribonucleoside in mRNA + 2 H(+). The catalysed reaction is IDP + H2O = IMP + phosphate + H(+). It carries out the reaction dIDP + H2O = dIMP + phosphate + H(+). The enzyme catalyses a 5'-end NAD(+)-phospho-ribonucleoside in mRNA + H2O = a 5'-end phospho-ribonucleoside in mRNA + NAD(+) + H(+). It catalyses the reaction a 5'-end FAD-phospho-ribonucleoside in mRNA + H2O = a 5'-end phospho-adenosine-phospho-ribonucleoside in mRNA + FMN + 2 H(+). The catalysed reaction is a 5'-end CoA-ribonucleoside in mRNA + H2O = a 5'-end phospho-adenosine-phospho-ribonucleoside in mRNA + (R)-4'-phosphopantetheine + 2 H(+). Functionally, RNA-binding and decapping enzyme that catalyzes the cleavage of the cap structure of snoRNAs and mRNAs in a metal-dependent manner. Part of the U8 snoRNP complex that is required for the accumulation of mature 5.8S and 28S rRNA. Has diphosphatase activity and removes m7G and/or m227G caps from U8 snoRNA and leaves a 5'monophosphate on the RNA. Also catalyzes the cleavage of the cap structure on mRNAs. Does not hydrolyze cap analog structures like 7-methylguanosine nucleoside triphosphate (m7GpppG). Also hydrolysis m7G- and m227G U3-capped RNAs but with less efficiencies. Has broad substrate specificity with manganese or cobalt as cofactor and can act on various RNA species. Binds to the U8 snoRNA; metal is not required for RNA-binding. May play a role in the regulation of snoRNAs and mRNAs degradation. Also acts as a phosphatase; hydrolyzes the non-canonical purine nucleotides inosine diphosphate (IDP) and deoxyinosine diphosphate (dITP) as well as guanosine diphosphate (GDP), deoxyguanosine diphosphate (dGDP), xanthine diphosphate (XDP), inosine triphosphate (ITP) and deoxyinosine triphosphate (ITP) to their respective monophosphate derivatives and does not distinguish between the deoxy- and ribose forms. The order of activity with different substrates is IDP &gt; dIDP &gt;&gt; GDP = dGDP &gt; XDP = ITP = dITP. Binds strongly to GTP, ITP and XTP. Participates in the hydrolysis of dIDP/IDP and probably excludes non-canonical purines from RNA and DNA precursor pools, thus preventing their incorporation into RNA and DNA and avoiding chromosomal lesions. Exhibits decapping activity towards NAD-capped RNAs and FAD-capped RNAs. Exhibits decapping activity towards dpCoA-capped RNAs in vitro. This is U8 snoRNA-decapping enzyme (nudt16) from Xenopus laevis (African clawed frog).